The primary structure comprises 100 residues: Small ribosomal subunit protein uS14c (100 aa).

It belongs to the universal ribosomal protein uS14 family. As to quaternary structure, part of the 30S ribosomal subunit.

Its subcellular location is the plastid. The protein localises to the chloroplast. Functionally, binds 16S rRNA, required for the assembly of 30S particles. The polypeptide is Small ribosomal subunit protein uS14c (Zygnema circumcarinatum (Green alga)).